The sequence spans 420 residues: Mannose-1-phosphate guanylyltransferase regulatory subunit alpha (420 aa).

The tract at residues 2–251 is substrate-binding domain; that stretch reads LKAVILIGGP…DGIWSQIKSA (250 aa). Residues glutamate 85 and glutamine 247 each coordinate GDP-alpha-D-mannose. The interval 273-420 is hexapeptide repeat domain; the sequence is LAKHTPGGPW…SRSFTNQIIL (148 aa). The segment at 356–384 is C-loop; that stretch reads TPSDPNPNDPRARMDSESLFKDGKLLPAI.

The protein belongs to the transferase hexapeptide repeat family. Component of the GMPPA-GMPPB mannose-1-phosphate guanylyltransferase complex composed of 4 GMPPA subunits and 8 GMPPB subunits; the complex is organized into three layers, a central layer made up of 2 GMPPA dimers sandwiched between two layers each made up of 2 GMPPB dimers. In terms of tissue distribution, expressed in fibroblasts (at protein level).

It is found in the cytoplasm. Functionally, regulatory subunit of the GMPPA-GMPPB mannose-1-phosphate guanylyltransferase complex; reduces the catalytic activity of GMPPB when part of the complex. Mediates allosteric feedback inhibition of GMPPB catalytic activity upon binding GDP-alpha-D-mannose. Together with GMPPB regulates GDP-alpha-D-mannose levels. This is Mannose-1-phosphate guanylyltransferase regulatory subunit alpha from Homo sapiens (Human).